The following is a 417-amino-acid chain: Valine--pyruvate aminotransferase (417 aa).

At lysine 249 the chain carries N6-(pyridoxal phosphate)lysine.

This sequence belongs to the class-I pyridoxal-phosphate-dependent aminotransferase family. In terms of assembly, homodimer. Pyridoxal 5'-phosphate is required as a cofactor.

It localises to the cytoplasm. The catalysed reaction is L-valine + pyruvate = 3-methyl-2-oxobutanoate + L-alanine. Involved in the biosynthesis of alanine. The protein is Valine--pyruvate aminotransferase (avtA) of Escherichia coli (strain K12).